The sequence spans 480 residues: MNTHPQTSPNTHYKIADISLTDWGRKEIDIAEHEMPGLMSIRRKYASKQPLKGVRVTGSLHMTIQTAVLIETLKDIGADVRWASCNIFSTQDHAAAAIATSGTPVFAWKGETLEEYWDCTLQALTFTLSDGTLTGPELIVDDGGDATLLIHKGYELENGSTWVDEPSDSLEEQVIKRLLKRIAIERPGYWTRVVNDWKGVSEETTTGVHRLYQIAATGRLLVPAINVNDSVTKSKFDNLYGCRESLADGLKRAMDVMLAGKLAVVCGYGDVGKGSAHSLRAYGARVIVTEIDPICALQAAMEGFEVTTVEDTLGQADIYVTTTGNKDVIRIEHMTAMKDQVIVCNIGHFDNEIQVDALNALAGVQKINIKPQVDKFILPNGNTLFLLAEGRLVNLGCATGHPSFVMSNSFANQTLAQIDLWQNKDVYEKNVYRLPKKLDEEVARLHLEKIGVKLTTLTANQAAYLGISVEGPFKPEHYRY.

The substrate site is built by Thr-63, Asp-142, and Glu-203. Residue Thr-204–Thr-206 participates in NAD(+) binding. Positions 233 and 237 each coordinate substrate. Residues Asn-238, Gly-267–Gly-272, Glu-290, Asn-325, Ile-346–His-348, and Asn-394 contribute to the NAD(+) site.

This sequence belongs to the adenosylhomocysteinase family. Requires NAD(+) as cofactor.

Its subcellular location is the cytoplasm. The catalysed reaction is S-adenosyl-L-homocysteine + H2O = L-homocysteine + adenosine. The protein operates within amino-acid biosynthesis; L-homocysteine biosynthesis; L-homocysteine from S-adenosyl-L-homocysteine: step 1/1. May play a key role in the regulation of the intracellular concentration of adenosylhomocysteine. The protein is Adenosylhomocysteinase of Xylella fastidiosa (strain 9a5c).